Here is a 275-residue protein sequence, read N- to C-terminus: Gamma carbonic anhydrase 1, mitochondrial (275 aa).

The N-terminal 43 residues, 1-43 (MGTLGRAFYSVGFWIRETGQALDRLGCRLQGKNYFREQLSRHR), are a transit peptide targeting the mitochondrion. Substrate is bound by residues 86–88 (RGD) and 101–102 (QD). Residues His-107, His-130, and His-135 each contribute to the Zn(2+) site. Asn-209 serves as a coordination point for substrate. The tract at residues 256–275 (LNLPNNILPDKETKRPSNVN) is disordered. Residues 264 to 275 (PDKETKRPSNVN) are compositionally biased toward basic and acidic residues.

This sequence belongs to the gamma-class carbonic anhydrase family. As to quaternary structure, homotrimer. Component of the mitochondrial oxidoreductase respiratory chain complex I; element of the extra matrix-exposed domain, which is attached to the membrane arm of this complex. The cofactor is Zn(2+).

The protein resides in the mitochondrion membrane. Functionally, enzyme involved in the catabolism of H(2)CO(3) but that does not mediates the reversible hydration of carbon dioxide. Mediates complex I assembly in mitochondria and respiration. In Arabidopsis thaliana (Mouse-ear cress), this protein is Gamma carbonic anhydrase 1, mitochondrial (GAMMACA1).